The sequence spans 380 residues: Sialidase-2 (380 aa).

The short motif at 20-23 (YRIP) is the FRIP motif element. Arg21 and Arg41 together coordinate substrate. Asp46 (proton acceptor) is an active-site residue. One copy of the BNR 1 repeat lies at 127–138 (VTSTDHGRTWSS). Residues Tyr179 and Tyr181 each coordinate substrate. One copy of the BNR 2 repeat lies at 197-208 (FLSHDHGRTWAR). Substrate is bound by residues Glu218, Arg237, and Arg304. Tyr334 acts as the Nucleophile in catalysis. Glu355 is a catalytic residue.

This sequence belongs to the glycosyl hydrolase 33 family. As to expression, expressed in skeletal muscle, fetal liver and embryonic carcinoma cell line NT2-D1.

The protein localises to the cytoplasm. It localises to the cytosol. The enzyme catalyses Hydrolysis of alpha-(2-&gt;3)-, alpha-(2-&gt;6)-, alpha-(2-&gt;8)- glycosidic linkages of terminal sialic acid residues in oligosaccharides, glycoproteins, glycolipids, colominic acid and synthetic substrates.. It carries out the reaction a ganglioside GD1a + H2O = a ganglioside GM1 + N-acetylneuraminate. The catalysed reaction is a ganglioside GM1 + H2O = a ganglioside GA1 + N-acetylneuraminate. It catalyses the reaction a ganglioside GT1b + H2O = a ganglioside GD1b + N-acetylneuraminate. The enzyme catalyses a ganglioside GD1b + H2O = a ganglioside GM1 + N-acetylneuraminate. It carries out the reaction a ganglioside GD3 + H2O = a ganglioside GM3 + N-acetylneuraminate. The catalysed reaction is a ganglioside GM3 + H2O = a beta-D-galactosyl-(1-&gt;4)-beta-D-glucosyl-(1&lt;-&gt;1)-ceramide + N-acetylneuraminate. It catalyses the reaction a ganglioside GM2 + H2O = a ganglioside GA2 + N-acetylneuraminate. The enzyme catalyses a neolactoside IV(3)-alpha-NeuAc-nLc4Cer(d18:1(4E)) + H2O = a neolactoside nLc4Cer(d18:1(4E)) + N-acetylneuraminate. It carries out the reaction N-acetyl-alpha-neuraminosyl-(2-&gt;3)-beta-D-galactosyl-(1-&gt;4)-D-glucose + H2O = lactose + N-acetylneuraminate. Exo-alpha-sialidase that catalyzes the hydrolytic cleavage of the terminal sialic acid (N-acetylneuraminic acid, Neu5Ac) of a glycan moiety in the catabolism of glycolipids, glycoproteins and oligosacharides. Recognizes sialyl linkage positions of the glycan moiety as well as the supramolecular organization of the sialoglycoconjugate. Displays preference for alpha-(2-&gt;3)-sialylated GD1a and GT1B gangliosides over alpha-(2-&gt;8)-sialylated GD1b, in both monomeric forms and micelles. Hydrolyzes monomeric GM1 ganglioside, but has no activity toward the miscellar form. Has lower sialidase activity for glycoproteins such as fetuin and TF/transferrin that carry a mixture of alpha-(2-&gt;3) and alpha-(2-&gt;6)-sialyl linkages. Cleaves milk oligosaccharide alpha-(2-&gt;3)-sialyllactose, but is inactive toward alpha-(2-&gt;6)-sialyllactose isomer. Has no activity toward colominic acid, a homomer of alpha-(2-&gt;8)-linked Neu5Ac residues. The protein is Sialidase-2 (NEU2) of Homo sapiens (Human).